A 330-amino-acid polypeptide reads, in one-letter code: Ribosomal RNA large subunit methyltransferase F (330 aa).

It belongs to the methyltransferase superfamily. METTL16/RlmF family.

The protein localises to the cytoplasm. The enzyme catalyses adenosine(1618) in 23S rRNA + S-adenosyl-L-methionine = N(6)-methyladenosine(1618) in 23S rRNA + S-adenosyl-L-homocysteine + H(+). In terms of biological role, specifically methylates the adenine in position 1618 of 23S rRNA. This chain is Ribosomal RNA large subunit methyltransferase F, found in Pseudoalteromonas atlantica (strain T6c / ATCC BAA-1087).